A 164-amino-acid chain; its full sequence is Large ribosomal subunit protein uL10 (164 aa).

This sequence belongs to the universal ribosomal protein uL10 family. In terms of assembly, part of the ribosomal stalk of the 50S ribosomal subunit. The N-terminus interacts with L11 and the large rRNA to form the base of the stalk. The C-terminus forms an elongated spine to which L12 dimers bind in a sequential fashion forming a multimeric L10(L12)X complex.

Its function is as follows. Forms part of the ribosomal stalk, playing a central role in the interaction of the ribosome with GTP-bound translation factors. The protein is Large ribosomal subunit protein uL10 (rplJ) of Helicobacter pylori (strain ATCC 700392 / 26695) (Campylobacter pylori).